The sequence spans 341 residues: Glycerol-3-phosphate dehydrogenase [NAD(P)+] (341 aa).

Residues Ser-15, Trp-16, Arg-36, and Lys-110 each contribute to the NADPH site. Sn-glycerol 3-phosphate contacts are provided by Lys-110, Gly-139, and Ser-141. Residue Ala-143 participates in NADPH binding. Sn-glycerol 3-phosphate contacts are provided by Lys-194, Asp-247, Ser-257, Arg-258, and Asn-259. The active-site Proton acceptor is Lys-194. Arg-258 contacts NADPH. Positions 282 and 284 each coordinate NADPH.

The protein belongs to the NAD-dependent glycerol-3-phosphate dehydrogenase family.

It is found in the cytoplasm. The enzyme catalyses sn-glycerol 3-phosphate + NAD(+) = dihydroxyacetone phosphate + NADH + H(+). It carries out the reaction sn-glycerol 3-phosphate + NADP(+) = dihydroxyacetone phosphate + NADPH + H(+). Its pathway is membrane lipid metabolism; glycerophospholipid metabolism. Catalyzes the reduction of the glycolytic intermediate dihydroxyacetone phosphate (DHAP) to sn-glycerol 3-phosphate (G3P), the key precursor for phospholipid synthesis. In Stenotrophomonas maltophilia (strain R551-3), this protein is Glycerol-3-phosphate dehydrogenase [NAD(P)+].